We begin with the raw amino-acid sequence, 346 residues long: (R,R)-butanediol dehydrogenase (346 aa).

Residues C37, H70, and E152 each coordinate Zn(2+).

Belongs to the zinc-containing alcohol dehydrogenase family. As to quaternary structure, homotetramer. Interacts with BrxC. Zn(2+) serves as cofactor.

It localises to the cytoplasm. The protein localises to the secreted. It carries out the reaction (R,R)-butane-2,3-diol + NAD(+) = (R)-acetoin + NADH + H(+). The polypeptide is (R,R)-butanediol dehydrogenase (Bacillus subtilis (strain 168)).